The primary structure comprises 612 residues: Probable Xaa-Pro aminopeptidase P (612 aa).

The Mn(2+) site is built by Asp-409, Asp-420, Glu-518, and Glu-532.

This sequence belongs to the peptidase M24B family. Mn(2+) serves as cofactor.

It carries out the reaction Release of any N-terminal amino acid, including proline, that is linked to proline, even from a dipeptide or tripeptide.. Its function is as follows. Catalyzes the removal of a penultimate prolyl residue from the N-termini of peptides. In Verticillium alfalfae (strain VaMs.102 / ATCC MYA-4576 / FGSC 10136) (Verticillium wilt of alfalfa), this protein is Probable Xaa-Pro aminopeptidase P (AMPP).